The primary structure comprises 310 residues: MTTSLLLRPRWIDPVMFLYDNGGGLDDTSKNMEGFTGGNFSPSPCRNLMSHPASLAPSATYPSSEVAAAAAGDSGKQCSPCSAVQGSASASISYGYFGGGGYYPCRMSHHHGSGGGVKTCAQSPASGSPYGEKYMDTSASTGEDYTSSRAKEFALYSSYASSPYQPVPSYLDVPVVQAISGPSEPRHESLLPMESYQPWAITTSGWNGQVYCTKEQQQTGNVWKSSIPESVSHGGADGSSFRRGRKKRVPYTKVQLKELEREYATNKFITKDKRRRISAQTNLSERQVTIWFQNRRVKEKKVVNKLKSSS.

Positions 244–303 (GRKKRVPYTKVQLKELEREYATNKFITKDKRRRISAQTNLSERQVTIWFQNRRVKEKKVV) form a DNA-binding region, homeobox.

The protein belongs to the Abd-B homeobox family.

It is found in the nucleus. Functionally, sequence-specific transcription factor which is part of a developmental regulatory system that provides cells with specific positional identities on the anterior-posterior axis. In Danio rerio (Zebrafish), this protein is Homeobox protein Hox-A13a (hoxa13a).